The chain runs to 178 residues: Prion-like protein doppel (178 aa).

Residues 1-25 (MRKHLGGCWLAIVCVLLFSQLSSVK) form the signal peptide. The interval 27–50 (RGIKHRIKWNRKVLPSTSQVTEAH) is flexible tail. A globular region spans residues 51–154 (TAEIRPGAFI…KHCDFWLERG (104 aa)). 2 cysteine pairs are disulfide-bonded: Cys94-Cys147 and Cys108-Cys142. Residues Asn98 and Asn110 are each glycosylated (N-linked (GlcNAc...) asparagine). Residues 124–141 (KQDNKLYQRVLWQLIREL) are cu(2+) binding. Gly154 is lipidated: GPI-anchor amidated glycine. Positions 155-178 (AGLQVTLDQPMMLCLLVFIWFIVK) are cleaved as a propeptide — removed in mature form.

This sequence belongs to the prion family. N-glycosylated. In terms of processing, O-glycosylated. Strongly expressed in testis. Detected at low levels in lymph node, spleen and ovary.

Its subcellular location is the cell membrane. In terms of biological role, required for normal acrosome reaction and for normal male fertility. Can bind Cu(2+). This chain is Prion-like protein doppel (PRND), found in Ovis aries (Sheep).